The following is a 391-amino-acid chain: Cytochrome b (391 aa).

4 consecutive transmembrane segments (helical) span residues 33-53, 77-98, 113-133, and 178-198; these read FGSL…FLAM, WLIR…YLHI, WSAG…GYVL, and FFAF…VHLL. 2 residues coordinate heme b: histidine 83 and histidine 97. 2 residues coordinate heme b: histidine 182 and histidine 196. Histidine 201 contacts a ubiquinone. The next 4 membrane-spanning stretches (helical) occupy residues 226–246, 288–308, 320–340, and 347–367; these read YKDL…VLFI, LGGV…PILH, LAQI…WIGG, and FIII…VFFP.

Belongs to the cytochrome b family. In terms of assembly, the cytochrome bc1 complex contains 3 respiratory subunits (MT-CYB, CYC1 and UQCRFS1), 2 core proteins (UQCRC1 and UQCRC2) and probably 6 low-molecular weight proteins. Requires heme b as cofactor.

It is found in the mitochondrion inner membrane. In terms of biological role, component of the ubiquinol-cytochrome c reductase complex (complex III or cytochrome b-c1 complex) that is part of the mitochondrial respiratory chain. The b-c1 complex mediates electron transfer from ubiquinol to cytochrome c. Contributes to the generation of a proton gradient across the mitochondrial membrane that is then used for ATP synthesis. The protein is Cytochrome b (mt-cyb) of Kryptolebias marmoratus (Mangrove killifish).